A 94-amino-acid chain; its full sequence is uncharacterized protein (94 aa).

The helical transmembrane segment at 13 to 33 (IVICLTTIISVTIFYILVSFF) threads the bilayer.

The protein resides in the membrane. This is an uncharacterized protein from Dictyostelium discoideum (Social amoeba).